We begin with the raw amino-acid sequence, 62 residues long: Potassium channel toxin kappa-KTx 3.3 (62 aa).

An N-terminal signal peptide occupies residues Met-1 to Ala-26. Residues Glu-27–Glu-36 constitute a propeptide that is removed on maturation. Intrachain disulfides connect Cys-43/Cys-61 and Cys-47/Cys-57.

Belongs to the short scorpion toxin superfamily. Potassium channel inhibitor kappa-KTx family. Kappa-KTx 3 subfamily. In terms of tissue distribution, expressed by the venom gland.

Its subcellular location is the secreted. In terms of biological role, potassium channel inhibitor (Kv). This is Potassium channel toxin kappa-KTx 3.3 from Heterometrus petersii (Asian forest scorpion).